Reading from the N-terminus, the 394-residue chain is E3 ubiquitin-protein ligase RNF149 (394 aa).

Residues Met-1 to Gly-31 form the signal peptide. 2 N-linked (GlcNAc...) asparagine glycosylation sites follow: Asn-51 and Asn-141. A PA domain is found at Ser-66–Val-171. A helical membrane pass occupies residues Val-197–Phe-217. The segment at Cys-265–Lys-306 adopts an RING-type; atypical zinc-finger fold. A disordered region spans residues Asp-321 to Cys-394. Thr-327 is modified (phosphothreonine). N-linked (GlcNAc...) asparagine glycosylation occurs at Asn-339. Residues Ser-341 and Ser-344 each carry the phosphoserine modification. The segment covering Ser-352–Ser-362 has biased composition (low complexity).

Its subcellular location is the membrane. The enzyme catalyses S-ubiquitinyl-[E2 ubiquitin-conjugating enzyme]-L-cysteine + [acceptor protein]-L-lysine = [E2 ubiquitin-conjugating enzyme]-L-cysteine + N(6)-ubiquitinyl-[acceptor protein]-L-lysine.. The protein operates within protein modification; protein ubiquitination. Functionally, E3 ubiquitin-protein ligase. Ubiquitinates BRAF, inducing its proteasomal degradation. This chain is E3 ubiquitin-protein ligase RNF149 (Rnf149), found in Mus musculus (Mouse).